The chain runs to 767 residues: Pyrin (767 aa).

The Pyrin domain occupies 1-92 (MAKTLGDHLL…AEELRKATGT (92 aa)). A disordered region spans residues 94 to 219 (HLIEENRVGG…LQGLYNNAPG (126 aa)). 3 stretches are compositionally biased toward polar residues: residues 126–142 (GTQQNNDESDTLPSSQA), 165–176 (LDSQTKPWTRST), and 183–208 (TQGTQSPGDKESTASAQLRRNVSSAG). A Phosphoserine modification is found at S241. The segment at 311–346 (TSLIGEERCPTSWTENGNGSPETTESSGETAGSILS) is disordered. The span at 321 to 340 (TSWTENGNGSPETTESSGET) shows a compositional bias: polar residues. The segment at 439–481 (QSLPQCPRHMKQVLLLFCEDHREPICLICRLSLEHQGHRVRPI) adopts a B box-type zinc-finger fold. Zn(2+) contacts are provided by C444, H447, C467, and H473. Residues 481–510 (IEEAALEYKEQIREQLERLREMRGYVEEHR) adopt a coiled-coil conformation. The tract at residues 489–647 (KEQIREQLER…CFSEMLSSEM (159 aa)) is required for homotrimerization and induction of pyroptosomes. The interval 697–719 (GGSEPKDYLHPQPAQDTPELHEI) is disordered.

As to quaternary structure, homotrimer. Interacts (via the B box-type zinc finger) with PSTPIP1. Interacts (via the B30.2/SPRY domain) with several components of the inflammasome complex, including CASP1 p20 and p10 subunits, CASP5, PYCARD, NLRP1, NLRP2 and NLRP3, as well as with unprocessed IL1B; this interaction may lead to autophagic degradation of these proteins. Component of the AIM2 PANoptosome complex, a multiprotein complex that drives inflammatory cell death (PANoptosis). Interacts with NFKBIA and RELA. Interacts weakly with VASP and ACTR3. Interacts with active ULK1 (phosphorylated on 'Ser-317') and BECN1 simultaneously. Also interacts with ATG16L1 (via WD repeats), and with ATG8 family members, including GABARAP, GABARAPL1 and, to a lesser extent, GABARAPL2, MAP1LC3A/LC3A and MAP1LC3C/LC3C. Interacts with TRIM21. Interacts with YWHAB, YWHAE, YWHAG, YWHAH, YWHAQ and YWHAZ; the interaction is required for the down-regulation of pyrin pro-inflammatory activity. Post-translationally, phosphorylation at Ser-241 is required for the interaction with 14-3-3 proteins and down-regulation of pyrin pro-inflammatory activity. Degraded along with the delivery of its substrates to autolysosomal compartments (at protein level). As to expression, expressed in spleen peripheral blood granulocytes. Not expressed in lymphocytes, thymus, testis, ovary, heart, brain, lung, liver, kidney and muscle.

It is found in the cytoplasm. It localises to the cytoskeleton. The protein localises to the cell projection. The protein resides in the ruffle. Its subcellular location is the lamellipodium. It is found in the cytoplasmic vesicle. It localises to the autophagosome. The protein localises to the nucleus. Involved in the regulation of innate immunity and the inflammatory response in response to IFNG/IFN-gamma. Organizes autophagic machinery by serving as a platform for the assembly of ULK1, Beclin 1/BECN1, ATG16L1, and ATG8 family members and recognizes specific autophagy targets, thus coordinating target recognition with assembly of the autophagic apparatus and initiation of autophagy. Acts as an autophagy receptor for the degradation of several inflammasome components, including CASP1, NLRP1 and NLRP3, hence preventing excessive IL1B- and IL18-mediated inflammation. However, it can also have a positive effect in the inflammatory pathway, acting as an innate immune sensor that triggers PYCARD/ASC specks formation, caspase-1 activation, and IL1B and IL18 production. Together with AIM2, also acts as a mediator of pyroptosis, necroptosis and apoptosis (PANoptosis), an integral part of host defense against pathogens, in response to bacterial infection. It is required for PSTPIP1-induced PYCARD/ASC oligomerization and inflammasome formation. Recruits PSTPIP1 to inflammasomes, and is required for PSTPIP1 oligomerization. The chain is Pyrin from Mus musculus (Mouse).